A 445-amino-acid chain; its full sequence is Chromosome partition protein MukF (445 aa).

The leucine-zipper stretch occupies residues 212 to 240 (LDETSGNLRELQDTLNAAGDKLQEQLLRI).

Belongs to the MukF family. In terms of assembly, interacts, and probably forms a ternary complex, with MukE and MukB via its C-terminal region. The complex formation is stimulated by calcium or magnesium. It is required for an interaction between MukE and MukB.

The protein localises to the cytoplasm. It localises to the nucleoid. In terms of biological role, involved in chromosome condensation, segregation and cell cycle progression. May participate in facilitating chromosome segregation by condensation DNA from both sides of a centrally located replisome during cell division. Not required for mini-F plasmid partitioning. Probably acts via its interaction with MukB and MukE. Overexpression results in anucleate cells. It has a calcium binding activity. The chain is Chromosome partition protein MukF from Mannheimia succiniciproducens (strain KCTC 0769BP / MBEL55E).